The sequence spans 369 residues: GTPase Obg (369 aa).

The region spanning 1-159 (MKFIDEARIE…RMLKLELKVL (159 aa)) is the Obg domain. Residues 128–147 (LHFKSSTNRAPRQKTDGKPG) form a disordered region. Residues 160–334 (ADVGLLGMPN…LCYAIYDYLA (175 aa)) enclose the OBG-type G domain. GTP contacts are provided by residues 166–173 (GMPNAGKS), 191–195 (FTTLA), 213–216 (DIPG), 284–287 (NKLD), and 315–317 (SAL). The Mg(2+) site is built by serine 173 and threonine 193.

Belongs to the TRAFAC class OBG-HflX-like GTPase superfamily. OBG GTPase family. Monomer. The cofactor is Mg(2+).

Its subcellular location is the cytoplasm. An essential GTPase which binds GTP, GDP and possibly (p)ppGpp with moderate affinity, with high nucleotide exchange rates and a fairly low GTP hydrolysis rate. Plays a role in control of the cell cycle, stress response, ribosome biogenesis and in those bacteria that undergo differentiation, in morphogenesis control. The sequence is that of GTPase Obg from Burkholderia multivorans (strain ATCC 17616 / 249).